Consider the following 568-residue polypeptide: Serine/threonine-protein kinase WNK2 (568 aa).

Residues 24–281 (GRYDEILGKG…ALELLQDPFL (258 aa)) enclose the Protein kinase domain. ATP-binding positions include 104–107 (TELF) and K154. The active-site Proton acceptor is the D171. The segment at 453–473 (SSGEKSHHNHHEFDSSEDKSC) is disordered. Over residues 463–472 (HEFDSSEDKS) the composition is skewed to basic and acidic residues.

Belongs to the protein kinase superfamily. Ser/Thr protein kinase family. WNK subfamily. Post-translationally, autophosphorylated.

It carries out the reaction L-seryl-[protein] + ATP = O-phospho-L-seryl-[protein] + ADP + H(+). The enzyme catalyses L-threonyl-[protein] + ATP = O-phospho-L-threonyl-[protein] + ADP + H(+). Its function is as follows. Regulates flowering time by modulating the photoperiod pathway. Possesses kinase activity in vitro. The polypeptide is Serine/threonine-protein kinase WNK2 (WNK2) (Arabidopsis thaliana (Mouse-ear cress)).